Consider the following 718-residue polypeptide: Neutral ceramidase B (718 aa).

The signal sequence occupies residues 1-20 (MINSFKKLIILISLVIILLS). N-linked (GlcNAc...) asparagine glycosylation is found at N224 and N252. S298 functions as the Nucleophile in the catalytic mechanism. Residues N358, N378, N391, N421, N422, N577, N610, and N614 are each glycosylated (N-linked (GlcNAc...) asparagine).

This sequence belongs to the neutral ceramidase family.

The protein localises to the secreted. It carries out the reaction an N-acylsphing-4-enine + H2O = sphing-4-enine + a fatty acid. In terms of biological role, hydrolyzes the sphingolipid ceramide into sphingosine and free fatty acid. In Dictyostelium discoideum (Social amoeba), this protein is Neutral ceramidase B (dcd2B).